A 370-amino-acid polypeptide reads, in one-letter code: Histidinol-phosphate aminotransferase 1 (370 aa).

Lys222 carries the post-translational modification N6-(pyridoxal phosphate)lysine.

The protein belongs to the class-II pyridoxal-phosphate-dependent aminotransferase family. Histidinol-phosphate aminotransferase subfamily. Homodimer. It depends on pyridoxal 5'-phosphate as a cofactor.

The catalysed reaction is L-histidinol phosphate + 2-oxoglutarate = 3-(imidazol-4-yl)-2-oxopropyl phosphate + L-glutamate. It participates in amino-acid biosynthesis; L-histidine biosynthesis; L-histidine from 5-phospho-alpha-D-ribose 1-diphosphate: step 7/9. This chain is Histidinol-phosphate aminotransferase 1 (hisC1), found in Bacillus anthracis.